Here is a 419-residue protein sequence, read N- to C-terminus: MIIDYLAQQDPEVAGAVAREVERQQHNLELIASENIASRAVMAAQGSVLTNKYAEGYPGKRYYGGCEYVDQAEQIAIDRAKTLFGAAYANVQPHSGSQANMAVYFALLSPGDTGLGMDLAHGGHLTHGSPVSFSGRLFDFKHYGVKKETGTIDYDQVADLAKTHRPKMIIAGASAYPRTLDFEKFAQIAASVEACLVVDMAHIAGLVAAGVHPSPVPHADVVTSTTHKTLRGPRGGLILSARADFGKALNKEIFPGIQGGPLMHVIAAKAVAFGEALTDGFVAYQQQVVKNARALAAHLMEQGIELVSGGTDNHMMLADLRNISVTGKAAETALERAGLTLNKNAVPFDTENPTVTSGVRIGTPVMTTRGMKEPEMAVVAGLIVNVLKNISNDTVIQATRKRVMELCEAFPIYRDNDNG.

(6S)-5,6,7,8-tetrahydrofolate is bound by residues Leu-119 and 123 to 125 (GHL). The residue at position 228 (Lys-228) is an N6-(pyridoxal phosphate)lysine.

It belongs to the SHMT family. In terms of assembly, homodimer. Requires pyridoxal 5'-phosphate as cofactor.

It is found in the cytoplasm. The catalysed reaction is (6R)-5,10-methylene-5,6,7,8-tetrahydrofolate + glycine + H2O = (6S)-5,6,7,8-tetrahydrofolate + L-serine. It participates in one-carbon metabolism; tetrahydrofolate interconversion. The protein operates within amino-acid biosynthesis; glycine biosynthesis; glycine from L-serine: step 1/1. Catalyzes the reversible interconversion of serine and glycine with tetrahydrofolate (THF) serving as the one-carbon carrier. This reaction serves as the major source of one-carbon groups required for the biosynthesis of purines, thymidylate, methionine, and other important biomolecules. Also exhibits THF-independent aldolase activity toward beta-hydroxyamino acids, producing glycine and aldehydes, via a retro-aldol mechanism. The protein is Serine hydroxymethyltransferase of Desulfosudis oleivorans (strain DSM 6200 / JCM 39069 / Hxd3) (Desulfococcus oleovorans).